The sequence spans 282 residues: Complement component 1 Q subcomponent-binding protein, mitochondrial (282 aa).

Residues M1–S73 constitute a mitochondrion transit peptide. The interval T76–E93 is C1q binding. At S87 the chain carries Phosphoserine. N6-acetyllysine is present on K91. Residues S138 to S164 form a disordered region. The interaction with MAVS stretch occupies residues F168 to S213. Phosphotyrosine is present on Y188. A phosphoserine mark is found at S201 and S205. T214 is modified (phosphothreonine).

It belongs to the MAM33 family. As to quaternary structure, homotrimer; three monomers form a donut-shaped structure with an unusually asymmetric charge distribution on the surface. Interacts with CDK13, HRK, VTN, NFYB, ADRA1B, FOXC1, DDX21, DDX50, NCL, SRSF1, SRSF9 and CDKN2A isoform smARF. Interacts with CD93; the association may represent a cell surface C1q receptor. Interacts with KRT1; the association represents a cell surface kininogen receptor. Interacts with CD209; the interaction is indicative for a C1q:C1QBP:CD209 signaling complex. Interacts with FBL and RRP1; the respective interactions with C1QBP are competitive. Probably associates with the mitoribosome. Interacts with MAVS; the interaction occurs upon viral transfection. Interacts with PPIF. Interacts with U2AF1L4. Interacts with PLEKHN1. Interacts with VGF-derived peptide TLQP-21. Interacts with POLGARF which is produced from an alternative reading frame of the POLG gene; the interaction results in nucleolar localization of C1QBP, probably due to prevention of C1QBP maturation and redirection from mitochondria to nucleoli. Interacts with MRE11 and RAD50; forming the MRC (MRE11-RAD50-C1QBP) complex that inhibits the activity of MRE11. In terms of assembly, (Microbial infection) Interacts with Rubella virus capsid protein; the interaction occurs in mitochondria. Interacts with Rubella virus protease/methyltransferase p150. (Microbial infection) Interacts with Staphylococcus aureus protein A/spa. As to quaternary structure, (Microbial infection) Interacts with Staphylococcus aureus protein A/spa, HIV-1 Tat and HCV core protein. In terms of assembly, (Microbial infection) Interacts with HIV-1 Tat and HCV core protein. (Microbial infection) Interacts with L.monocytogenes internalin B. As to quaternary structure, (Microbial infection) Interacts with Epstein-Barr virus EBNA1. Expressed on cell surface of peripheral blood cells (at protein level); Surface expression is reported for macrophages and monocyte-derived dendritic cells.

The protein resides in the mitochondrion matrix. Its subcellular location is the nucleus. It localises to the nucleolus. The protein localises to the cell membrane. It is found in the secreted. The protein resides in the cytoplasm. Functionally, multifunctional and multicompartmental protein involved in inflammation and infection processes, ribosome biogenesis, protein synthesis in mitochondria, regulation of apoptosis, transcriptional regulation and pre-mRNA splicing. At the cell surface is thought to act as an endothelial receptor for plasma proteins of the complement and kallikrein-kinin cascades. Putative receptor for C1q; specifically binds to the globular 'heads' of C1q thus inhibiting C1; may perform the receptor function through a complex with C1qR/CD93. In complex with cytokeratin-1/KRT1 is a high affinity receptor for kininogen-1/HMWK. Can also bind other plasma proteins, such as coagulation factor XII leading to its autoactivation. May function to bind initially fluid kininogen-1 to the cell membrane. The secreted form may enhance both extrinsic and intrinsic coagulation pathways. It is postulated that the cell surface form requires docking with transmembrane proteins for downstream signaling which might be specific for a cell-type or response. By acting as C1q receptor is involved in chemotaxis of immature dendritic cells and neutrophils and is proposed to signal through CD209/DC-SIGN on immature dendritic cells, through integrin alpha-4/beta-1 during trophoblast invasion of the decidua, and through integrin beta-1 during endothelial cell adhesion and spreading. Signaling involved in inhibition of innate immune response is implicating the PI3K-AKT/PKB pathway. Required for protein synthesis in mitochondria. In mitochondrial translation may be involved in formation of functional 55S mitoribosomes; the function seems to involve its RNA-binding activity. Acts as a RNA modification reader, which specifically recognizes and binds mitochondrial RNAs modified by C5-methylcytosine (m5C) in response to stress, and promotes recruitment of the mitochondrial degradosome complex, leading to their degradation. May be involved in the nucleolar ribosome maturation process; the function may involve the exchange of FBL for RRP1 in the association with pre-ribosome particles. Involved in regulation of RNA splicing by inhibiting the RNA-binding capacity of SRSF1 and its phosphorylation. Is required for the nuclear translocation of splicing factor U2AF1L4. Involved in regulation of CDKN2A- and HRK-mediated apoptosis. Stabilizes mitochondrial CDKN2A isoform smARF. May be involved in regulation of FOXC1 transcriptional activity and NFY/CCAAT-binding factor complex-mediated transcription. May play a role in antibacterial defense as it can bind to cell surface hyaluronan and inhibit Streptococcus pneumoniae hyaluronate lyase. May be involved in modulation of the immune response; ligation by HCV core protein is resulting in suppression of interleukin-12 production in monocyte-derived dendritic cells. Involved in regulation of antiviral response by inhibiting RIGI- and IFIH1-mediated signaling pathways probably involving its association with MAVS after viral infection. Acts as a regulator of DNA repair via homologous recombination by inhibiting the activity of MRE11: interacts with unphosphorylated MRE11 and RAD50 in absence of DNA damage, preventing formation and activity of the MRN complex. Following DNA damage, dissociates from phosphorylated MRE11, allowing formation of the MRN complex. In terms of biological role, (Microbial infection) Involved in HIV-1 replication, presumably by contributing to splicing of viral RNA. Its function is as follows. (Microbial infection) In infection processes acts as an attachment site for microbial proteins, including Listeria monocytogenes internalin B (InlB) and Staphylococcus aureus protein A. (Microbial infection) Involved in replication of Rubella virus. In Homo sapiens (Human), this protein is Complement component 1 Q subcomponent-binding protein, mitochondrial (C1QBP).